A 522-amino-acid chain; its full sequence is 2-isopropylmalate synthase (522 aa).

The region spanning 5-267 is the Pyruvate carboxyltransferase domain; it reads VIIFDTTLRD…DCGINAKEIH (263 aa). 4 residues coordinate Mn(2+): Asp14, His202, His204, and Asn238. The interval 392–522 is regulatory domain; sequence QLQHMMVHSD…IHKERELGGV (131 aa).

The protein belongs to the alpha-IPM synthase/homocitrate synthase family. LeuA type 1 subfamily. Homodimer. Mn(2+) is required as a cofactor.

The protein resides in the cytoplasm. It carries out the reaction 3-methyl-2-oxobutanoate + acetyl-CoA + H2O = (2S)-2-isopropylmalate + CoA + H(+). The protein operates within amino-acid biosynthesis; L-leucine biosynthesis; L-leucine from 3-methyl-2-oxobutanoate: step 1/4. Its function is as follows. Catalyzes the condensation of the acetyl group of acetyl-CoA with 3-methyl-2-oxobutanoate (2-ketoisovalerate) to form 3-carboxy-3-hydroxy-4-methylpentanoate (2-isopropylmalate). The chain is 2-isopropylmalate synthase from Shewanella frigidimarina (strain NCIMB 400).